A 392-amino-acid polypeptide reads, in one-letter code: Dual-specificity RNA methyltransferase RlmN (392 aa).

E115 (proton acceptor) is an active-site residue. The region spanning 121–358 (EVDRGTLCIS…YKAGYASPIR (238 aa)) is the Radical SAM core domain. C128 and C369 are disulfide-bonded. [4Fe-4S] cluster-binding residues include C135, C139, and C142. Residues 195 to 196 (GE), S227, 249 to 251 (SFH), and N326 contribute to the S-adenosyl-L-methionine site. C369 acts as the S-methylcysteine intermediate in catalysis.

This sequence belongs to the radical SAM superfamily. RlmN family. [4Fe-4S] cluster is required as a cofactor.

It is found in the cytoplasm. The catalysed reaction is adenosine(2503) in 23S rRNA + 2 reduced [2Fe-2S]-[ferredoxin] + 2 S-adenosyl-L-methionine = 2-methyladenosine(2503) in 23S rRNA + 5'-deoxyadenosine + L-methionine + 2 oxidized [2Fe-2S]-[ferredoxin] + S-adenosyl-L-homocysteine. The enzyme catalyses adenosine(37) in tRNA + 2 reduced [2Fe-2S]-[ferredoxin] + 2 S-adenosyl-L-methionine = 2-methyladenosine(37) in tRNA + 5'-deoxyadenosine + L-methionine + 2 oxidized [2Fe-2S]-[ferredoxin] + S-adenosyl-L-homocysteine. Its function is as follows. Specifically methylates position 2 of adenine 2503 in 23S rRNA and position 2 of adenine 37 in tRNAs. m2A2503 modification seems to play a crucial role in the proofreading step occurring at the peptidyl transferase center and thus would serve to optimize ribosomal fidelity. This is Dual-specificity RNA methyltransferase RlmN from Jannaschia sp. (strain CCS1).